Here is a 238-residue protein sequence, read N- to C-terminus: N-acetylneuraminic acid outer membrane channel protein NanC (238 aa).

Residues 1-23 (MKKAKILSGVLLLCFSSPLISQA) form the signal peptide. Over 24–25 (AT) the chain is Periplasmic. A transmembrane span lies at residues 26–32 (LDVRGGY). Over 33–39 (RSGSHAY) the chain is Extracellular. A transmembrane span lies at residues 40–49 (ETRLKVSEGW). Over 50-52 (QNG) the chain is Periplasmic. Residues 53–61 (WWASMESNT) are membrane-embedded. The Extracellular segment spans residues 62-76 (WNTIHDNKKENAALN). Over 77-86 (DVQVEVNYAI) the chain traverses the membrane. The Periplasmic portion of the chain corresponds to 87–91 (KLDDQ). A transmembrane helix spans residues 92 to 102 (WTVRPGMLTHF). Topologically, residues 103–107 (SSNGT) are extracellular. The chain crosses the lipid bilayer at residues 108-117 (RYGPYVKLSW). Residues 118 to 122 (DATKD) are Periplasmic-facing. At 123-132 (LKFGIRYRYD) the chain is embedded in the membrane. At 133–151 (WKAYRQQDLSGDMSRDNVH) the chain is on the extracellular side. Over 152-159 (RWDGYVTY) the chain traverses the membrane. Over 160–164 (HINSD) the chain is Periplasmic. A transmembrane helix spans residues 165–173 (FTFAWQTTL). Over 174-190 (YSKQNDYRYANHKKWAT) the chain is Extracellular. Over 191–200 (ENAFVLQYHM) the chain traverses the membrane. The Periplasmic portion of the chain corresponds to 201–203 (TPD). Residues 204–212 (ITPYIEYDY) are membrane-embedded. Residues 213 to 228 (LDRQGVYNGRDNLSEN) lie on the Extracellular side of the membrane. The chain crosses the lipid bilayer at residues 229 to 236 (SYRIGVSF). Over 237 to 238 (KL) the chain is Periplasmic.

It belongs to the oligogalacturonate-specific porin KdgM (TC 1.B.35) family. NanC subfamily. In terms of assembly, monomer.

Its subcellular location is the cell outer membrane. The enzyme catalyses N-acetylneuraminate(in) = N-acetylneuraminate(out). Its function is as follows. Outer membrane channel protein allowing the entry of N-acetylneuraminic acid (Neu5Ac, the most abundant sialic acid on host cell surfaces) into the bacteria. NanC proteins form high-conductance channels which are open at low membrane potentials and which have a weak anion selectivity. The sequence is that of N-acetylneuraminic acid outer membrane channel protein NanC (nanC) from Escherichia coli O6:H1 (strain CFT073 / ATCC 700928 / UPEC).